We begin with the raw amino-acid sequence, 747 residues long: Myotubularin-related protein 12 (747 aa).

The region spanning 205–643 (FDTLKDWCWE…PEIKVWAQRY (439 aa)) is the Myotubularin phosphatase domain. The segment at 449 to 558 (VPVFLLFLDC…KGQRKGMRFK (110 aa)) is interaction with MTM1. 3 positions are modified to phosphoserine: serine 564, serine 601, and serine 716.

It belongs to the protein-tyrosine phosphatase family. Non-receptor class myotubularin subfamily. In terms of assembly, heterodimer with lipid phosphatase MTM1. Heterodimer with lipid phosphatase MTMR2. As to expression, expressed in skeletal muscles (at protein level). Ubiquitous with prominent expression in brain, heart, kidney, placenta, and lung.

Its subcellular location is the cytoplasm. The protein localises to the sarcoplasmic reticulum. It is found in the myofibril. It localises to the sarcomere. Its function is as follows. Acts as an adapter for the myotubularin-related phosphatases. Regulates phosphatase MTM1 protein stability and possibly its intracellular location. By stabilizing MTM1 protein levels, required for skeletal muscle maintenance but not for myogenesis. The protein is Myotubularin-related protein 12 (MTMR12) of Homo sapiens (Human).